Reading from the N-terminus, the 235-residue chain is 2-C-methyl-D-erythritol 4-phosphate cytidylyltransferase (235 aa).

This sequence belongs to the IspD/TarI cytidylyltransferase family. IspD subfamily.

It catalyses the reaction 2-C-methyl-D-erythritol 4-phosphate + CTP + H(+) = 4-CDP-2-C-methyl-D-erythritol + diphosphate. It functions in the pathway isoprenoid biosynthesis; isopentenyl diphosphate biosynthesis via DXP pathway; isopentenyl diphosphate from 1-deoxy-D-xylulose 5-phosphate: step 2/6. Its function is as follows. Catalyzes the formation of 4-diphosphocytidyl-2-C-methyl-D-erythritol from CTP and 2-C-methyl-D-erythritol 4-phosphate (MEP). This chain is 2-C-methyl-D-erythritol 4-phosphate cytidylyltransferase, found in Pseudomonas putida (strain ATCC 700007 / DSM 6899 / JCM 31910 / BCRC 17059 / LMG 24140 / F1).